Here is a 513-residue protein sequence, read N- to C-terminus: MQLNSTEISDLIKQRIEQFNVVSEARNEGTIVAVSDGIIRIHGLADVMQGEMIELPGNRFAIALNLERDSVGAVVMGPYANLAEGDKVKTTGRILEVPVGRGLLGRVVNTLGEPIDGKGPLEHDGFSPVEVIAPGVIERKSVDQPVQTGYKAVDSMIPIGRGQRELIIGDRQIGKTALAIDAIINQKDTGIKCVYVAVGQKASTIANVVRKLDEHGALANTIVVVATASEAAALQYLAPYSGCSMGEYFRDRGEDSLIVYDDLSKQAVAYRQISLLLKRPPGREAYPGDVFYLHSRLLERASRVNAEYVEKFTKGEVKGQTGSLTALPIIETQAGDVSAFVPTNVISITDGQIFLETDLFNSGLRPAVNPGISVSRVGGAAQTKIIKKLSGGIRSALAQYRELAAFSQFASDLDDATRAQLEHGERVTELMKQKQYAPMSVANQAVSIFSAEKGYLKSVELNKIGDFEASLLSFMNSEHADLMKTINDTGDYNADIEGELKAGLDKFVETQTW.

169–176 (GDRQIGKT) is an ATP binding site.

The protein belongs to the ATPase alpha/beta chains family. F-type ATPases have 2 components, CF(1) - the catalytic core - and CF(0) - the membrane proton channel. CF(1) has five subunits: alpha(3), beta(3), gamma(1), delta(1), epsilon(1). CF(0) has three main subunits: a(1), b(2) and c(9-12). The alpha and beta chains form an alternating ring which encloses part of the gamma chain. CF(1) is attached to CF(0) by a central stalk formed by the gamma and epsilon chains, while a peripheral stalk is formed by the delta and b chains.

The protein resides in the cell inner membrane. The enzyme catalyses ATP + H2O + 4 H(+)(in) = ADP + phosphate + 5 H(+)(out). Functionally, produces ATP from ADP in the presence of a proton gradient across the membrane. The alpha chain is a regulatory subunit. This is ATP synthase subunit alpha from Shewanella halifaxensis (strain HAW-EB4).